The chain runs to 68 residues: Large ribosomal subunit protein bL31 (68 aa).

Residues cysteine 16, cysteine 18, cysteine 38, and cysteine 41 each coordinate Zn(2+).

It belongs to the bacterial ribosomal protein bL31 family. Type A subfamily. Part of the 50S ribosomal subunit. It depends on Zn(2+) as a cofactor.

In terms of biological role, binds the 23S rRNA. The polypeptide is Large ribosomal subunit protein bL31 (Thiobacillus denitrificans (strain ATCC 25259 / T1)).